The following is a 262-amino-acid chain: tRNA 4-demethylwyosine(37)-methyltransferase Taw21 (262 aa).

Residues His-108, Phe-125, 148–149 (DL), and 175–176 (DA) contribute to the S-adenosyl-L-methionine site.

The protein belongs to the class I-like SAM-binding methyltransferase superfamily. TRM5/TYW2 family.

It is found in the cytoplasm. The catalysed reaction is 4-demethylwyosine(37) in tRNA(Phe) + S-adenosyl-L-methionine = isowyosine(37) in tRNA(Phe) + S-adenosyl-L-homocysteine + H(+). Functionally, catalyzes the C7-methylation of 4-demethylwyosine (imG-14) at position 37 in tRNA(Phe). The chain is tRNA 4-demethylwyosine(37)-methyltransferase Taw21 from Saccharolobus solfataricus (strain ATCC 35092 / DSM 1617 / JCM 11322 / P2) (Sulfolobus solfataricus).